Here is a 37-residue protein sequence, read N- to C-terminus: Photosystem II reaction center protein M (37 aa).

The chain crosses the membrane as a helical span at residues 5-25 (ILAFIATALFILVPTAFLLII).

It belongs to the PsbM family. As to quaternary structure, PSII is composed of 1 copy each of membrane proteins PsbA, PsbB, PsbC, PsbD, PsbE, PsbF, PsbH, PsbI, PsbJ, PsbK, PsbL, PsbM, PsbT, PsbX, PsbY, PsbZ, Psb30/Ycf12, at least 3 peripheral proteins of the oxygen-evolving complex and a large number of cofactors. It forms dimeric complexes.

It is found in the plastid. The protein resides in the chloroplast thylakoid membrane. Its function is as follows. One of the components of the core complex of photosystem II (PSII). PSII is a light-driven water:plastoquinone oxidoreductase that uses light energy to abstract electrons from H(2)O, generating O(2) and a proton gradient subsequently used for ATP formation. It consists of a core antenna complex that captures photons, and an electron transfer chain that converts photonic excitation into a charge separation. This subunit is found at the monomer-monomer interface. In Pelargonium hortorum (Common geranium), this protein is Photosystem II reaction center protein M.